Reading from the N-terminus, the 250-residue chain is Type III pantothenate kinase (250 aa).

An ATP-binding site is contributed by 6-13 (DVGNTNTV). Position 103 to 106 (103 to 106 (GADR)) interacts with substrate. D105 (proton acceptor) is an active-site residue. A K(+)-binding site is contributed by D125. Position 128 (T128) interacts with ATP. T180 contributes to the substrate binding site.

The protein belongs to the type III pantothenate kinase family. Homodimer. NH4(+) is required as a cofactor. It depends on K(+) as a cofactor.

It is found in the cytoplasm. The enzyme catalyses (R)-pantothenate + ATP = (R)-4'-phosphopantothenate + ADP + H(+). It functions in the pathway cofactor biosynthesis; coenzyme A biosynthesis; CoA from (R)-pantothenate: step 1/5. Functionally, catalyzes the phosphorylation of pantothenate (Pan), the first step in CoA biosynthesis. The protein is Type III pantothenate kinase of Frankia casuarinae (strain DSM 45818 / CECT 9043 / HFP020203 / CcI3).